Reading from the N-terminus, the 164-residue chain is R-phycoerythrin alpha chain (164 aa).

(2R,3E)-phycoerythrobilin-binding residues include N47, K81, C82, R84, H88, R137, C139, and R142.

The protein belongs to the phycobiliprotein family. As to quaternary structure, heterododecamer of 6 alpha and 6 beta chains. The basic functional unit of phycobiliproteins is a ring-shaped hexamer formed from two back-to-back trimers contacting via the alpha chain subunits. The trimers are composed of alpha/beta subunit heterodimers arranged around a three-fold axis of symmetry. The phycoerythrins also contain a gamma subunit which is located in the center of the hexamer. In terms of processing, contains two covalently linked phycoerythrobilin chromophores.

Its subcellular location is the plastid. The protein localises to the chloroplast thylakoid membrane. Functionally, light-harvesting photosynthetic tetrapyrrole chromophore-protein from the phycobiliprotein complex. The chain is R-phycoerythrin alpha chain (rpeA) from Agarophyton chilense (Red seaweed).